A 197-amino-acid chain; its full sequence is Mediator of RNA polymerase II transcription subunit 10 (197 aa).

The interval 1 to 39 (MSSTAGTRRPRQITPTSPSPSPEPQPGATNGSSSTINVA) is disordered. A compositionally biased stretch (polar residues) spans 27–37 (GATNGSSSTIN).

The protein belongs to the Mediator complex subunit 10 family. In terms of assembly, component of the Mediator complex.

It is found in the nucleus. Functionally, component of the Mediator complex, a coactivator involved in the regulated transcription of nearly all RNA polymerase II-dependent genes. Mediator functions as a bridge to convey information from gene-specific regulatory proteins to the basal RNA polymerase II transcription machinery. Mediator is recruited to promoters by direct interactions with regulatory proteins and serves as a scaffold for the assembly of a functional preinitiation complex with RNA polymerase II and the general transcription factors. This chain is Mediator of RNA polymerase II transcription subunit 10 (NUT2), found in Mycosarcoma maydis (Corn smut fungus).